A 196-amino-acid polypeptide reads, in one-letter code: ATP-dependent Clp protease proteolytic subunit (196 aa).

Ser101 (nucleophile) is an active-site residue. Residue His126 is part of the active site.

This sequence belongs to the peptidase S14 family. As to quaternary structure, component of the chloroplastic Clp protease core complex.

The protein resides in the plastid. Its subcellular location is the chloroplast stroma. It carries out the reaction Hydrolysis of proteins to small peptides in the presence of ATP and magnesium. alpha-casein is the usual test substrate. In the absence of ATP, only oligopeptides shorter than five residues are hydrolyzed (such as succinyl-Leu-Tyr-|-NHMec, and Leu-Tyr-Leu-|-Tyr-Trp, in which cleavage of the -Tyr-|-Leu- and -Tyr-|-Trp bonds also occurs).. Functionally, cleaves peptides in various proteins in a process that requires ATP hydrolysis. Has a chymotrypsin-like activity. Plays a major role in the degradation of misfolded proteins. In Eucalyptus globulus subsp. globulus (Tasmanian blue gum), this protein is ATP-dependent Clp protease proteolytic subunit.